Here is a 191-residue protein sequence, read N- to C-terminus: Acireductone dioxygenase 2 (191 aa).

Residues histidine 102, histidine 104, glutamate 108, and histidine 146 each contribute to the Fe(2+) site. Positions 102, 104, 108, and 146 each coordinate Ni(2+).

It belongs to the acireductone dioxygenase (ARD) family. As to quaternary structure, monomer. Fe(2+) serves as cofactor. The cofactor is Ni(2+).

The enzyme catalyses 1,2-dihydroxy-5-(methylsulfanyl)pent-1-en-3-one + O2 = 3-(methylsulfanyl)propanoate + CO + formate + 2 H(+). It carries out the reaction 1,2-dihydroxy-5-(methylsulfanyl)pent-1-en-3-one + O2 = 4-methylsulfanyl-2-oxobutanoate + formate + 2 H(+). It participates in amino-acid biosynthesis; L-methionine biosynthesis via salvage pathway; L-methionine from S-methyl-5-thio-alpha-D-ribose 1-phosphate: step 5/6. Its function is as follows. Catalyzes 2 different reactions between oxygen and the acireductone 1,2-dihydroxy-3-keto-5-methylthiopentene (DHK-MTPene) depending upon the metal bound in the active site. Fe-containing acireductone dioxygenase (Fe-ARD) produces formate and 2-keto-4-methylthiobutyrate (KMTB), the alpha-ketoacid precursor of methionine in the methionine recycle pathway. Ni-containing acireductone dioxygenase (Ni-ARD) produces methylthiopropionate, carbon monoxide and formate, and does not lie on the methionine recycle pathway. This Nocardia farcinica (strain IFM 10152) protein is Acireductone dioxygenase 2.